We begin with the raw amino-acid sequence, 295 residues long: 4-hydroxy-tetrahydrodipicolinate synthase (295 aa).

Pyruvate is bound at residue T47. Residue Y135 is the Proton donor/acceptor of the active site. K163 (schiff-base intermediate with substrate) is an active-site residue. A pyruvate-binding site is contributed by I206.

The protein belongs to the DapA family. As to quaternary structure, homodimer.

It is found in the cytoplasm. It carries out the reaction L-aspartate 4-semialdehyde + pyruvate = (2S,4S)-4-hydroxy-2,3,4,5-tetrahydrodipicolinate + H2O + H(+). Its pathway is amino-acid biosynthesis; L-lysine biosynthesis via DAP pathway; (S)-tetrahydrodipicolinate from L-aspartate: step 3/4. Its activity is regulated as follows. Is not feedback inhibited by lysine. Its function is as follows. Catalyzes the condensation of (S)-aspartate-beta-semialdehyde [(S)-ASA] and pyruvate to 4-hydroxy-tetrahydrodipicolinate (HTPA). The polypeptide is 4-hydroxy-tetrahydrodipicolinate synthase (Staphylococcus aureus (strain COL)).